The primary structure comprises 137 residues: uncharacterized protein (137 aa).

The helical transmembrane segment at 116–136 threads the bilayer; that stretch reads YLSIANLATLLLFGIIGLSII.

It is found in the host membrane. This is an uncharacterized protein from His1 virus (isolate Australia/Victoria) (His1V).